We begin with the raw amino-acid sequence, 153 residues long: Phosphopantetheine adenylyltransferase (153 aa).

Residue Ser11 participates in substrate binding. ATP-binding positions include Ser11–Phe12 and His19. The substrate site is built by Lys43, Thr75, and Arg89. ATP is bound by residues Gly90 to Arg92, Glu100, and Leu124 to Ser130.

Belongs to the bacterial CoaD family. As to quaternary structure, homohexamer. It depends on Mg(2+) as a cofactor.

Its subcellular location is the cytoplasm. The catalysed reaction is (R)-4'-phosphopantetheine + ATP + H(+) = 3'-dephospho-CoA + diphosphate. Its pathway is cofactor biosynthesis; coenzyme A biosynthesis; CoA from (R)-pantothenate: step 4/5. Reversibly transfers an adenylyl group from ATP to 4'-phosphopantetheine, yielding dephospho-CoA (dPCoA) and pyrophosphate. The protein is Phosphopantetheine adenylyltransferase of Porphyromonas gingivalis (strain ATCC 33277 / DSM 20709 / CIP 103683 / JCM 12257 / NCTC 11834 / 2561).